A 304-amino-acid chain; its full sequence is Recombination-associated protein RdgC (304 aa).

Belongs to the RdgC family.

It localises to the cytoplasm. The protein resides in the nucleoid. In terms of biological role, may be involved in recombination. This chain is Recombination-associated protein RdgC, found in Shewanella putrefaciens (strain CN-32 / ATCC BAA-453).